A 316-amino-acid polypeptide reads, in one-letter code: Ribosomal protein L11 methyltransferase (316 aa).

Residues Thr-159, Gly-179, Asp-201, and Asn-243 each contribute to the S-adenosyl-L-methionine site.

Belongs to the methyltransferase superfamily. PrmA family.

The protein resides in the cytoplasm. The enzyme catalyses L-lysyl-[protein] + 3 S-adenosyl-L-methionine = N(6),N(6),N(6)-trimethyl-L-lysyl-[protein] + 3 S-adenosyl-L-homocysteine + 3 H(+). In terms of biological role, methylates ribosomal protein L11. This Gloeobacter violaceus (strain ATCC 29082 / PCC 7421) protein is Ribosomal protein L11 methyltransferase.